A 123-amino-acid polypeptide reads, in one-letter code: MTVIYQTTITRIGASATDALSDQMLITFREGAPADLEEYCFIHCHGELKGALHPGLQFSLGQHRYPVTAVGSVAEDNLRELGHVTLRFDGLNEAEFPGTVHVAGPVPDDIAPGSVLKFESVKE.

In terms of domain architecture, PTS EIIA type-5 spans 1–116 (MTVIYQTTIT…PDDIAPGSVL (116 aa)). His43 (tele-phosphohistidine intermediate) is an active-site residue. Position 43 is a phosphohistidine; by HPr (His43).

The protein localises to the cytoplasm. Its function is as follows. The phosphoenolpyruvate-dependent sugar phosphotransferase system (sugar PTS), a major carbohydrate active transport system, catalyzes the phosphorylation of incoming sugar substrates concomitantly with their translocation across the cell membrane. The enzyme II complex composed of SrlA, SrlB and SrlE is involved in glucitol/sorbitol transport. This chain is PTS system glucitol/sorbitol-specific EIIA component (srlB), found in Shigella flexneri.